A 429-amino-acid chain; its full sequence is Saccharopine dehydrogenase-like oxidoreductase (429 aa).

N-acetylalanine is present on Ala2. 3 positions are modified to phosphoserine: Ser209, Ser215, and Ser217.

This sequence belongs to the saccharopine dehydrogenase family.

This is Saccharopine dehydrogenase-like oxidoreductase (Sccpdh) from Rattus norvegicus (Rat).